We begin with the raw amino-acid sequence, 564 residues long: Probable diguanylate cyclase DgcQ (564 aa).

The next 2 membrane-spanning stretches (helical) occupy residues 20–40 and 360–380; these read LGPG…STLL and IALT…WYVI. Positions 428–563 constitute a GGDEF domain; the sequence is HPFSVIQVDL…GRNRVFASDN (136 aa). Asp436 serves as a coordination point for Mg(2+). Substrate is bound by residues Asn444, His449, and Asp453. A Mg(2+)-binding site is contributed by Glu479. The active-site Proton acceptor is the Glu479.

Homodimer. It depends on Mg(2+) as a cofactor.

It localises to the cell inner membrane. The enzyme catalyses 2 GTP = 3',3'-c-di-GMP + 2 diphosphate. It functions in the pathway glycan metabolism; bacterial cellulose biosynthesis. It participates in purine metabolism; 3',5'-cyclic di-GMP biosynthesis. Functionally, catalyzes the synthesis of cyclic-di-GMP (c-di-GMP) via the condensation of 2 GTP molecules. Cyclic-di-GMP is a second messenger which controls cell surface-associated traits in bacteria. Involved in the regulation of cellulose production. The sequence is that of Probable diguanylate cyclase DgcQ from Escherichia coli (strain K12).